Here is a 338-residue protein sequence, read N- to C-terminus: Heat-inducible transcription repressor HrcA (338 aa).

Belongs to the HrcA family.

Negative regulator of class I heat shock genes (grpE-dnaK-dnaJ and groELS operons). Prevents heat-shock induction of these operons. The chain is Heat-inducible transcription repressor HrcA from Bacillus anthracis (strain A0248).